We begin with the raw amino-acid sequence, 232 residues long: Demethylmenaquinone methyltransferase (232 aa).

S-adenosyl-L-methionine contacts are provided by residues threonine 58, aspartate 79, and 104–105; that span reads NA.

Belongs to the class I-like SAM-binding methyltransferase superfamily. MenG/UbiE family.

It catalyses the reaction a 2-demethylmenaquinol + S-adenosyl-L-methionine = a menaquinol + S-adenosyl-L-homocysteine + H(+). It functions in the pathway quinol/quinone metabolism; menaquinone biosynthesis; menaquinol from 1,4-dihydroxy-2-naphthoate: step 2/2. In terms of biological role, methyltransferase required for the conversion of demethylmenaquinol (DMKH2) to menaquinol (MKH2). The chain is Demethylmenaquinone methyltransferase from Bacillus licheniformis (strain ATCC 14580 / DSM 13 / JCM 2505 / CCUG 7422 / NBRC 12200 / NCIMB 9375 / NCTC 10341 / NRRL NRS-1264 / Gibson 46).